The following is a 337-amino-acid chain: Ketol-acid reductoisomerase (NADP(+)) (337 aa).

Positions 1–183 constitute a KARI N-terminal Rossmann domain; the sequence is MAIETLYDSD…GGARAGVIPT (183 aa). Residues 26–29, Arg49, Ser52, Ser54, and 84–87 each bind NADP(+); these read YGSQ and DTSQ. His109 is an active-site residue. Residue Gly135 coordinates NADP(+). The KARI C-terminal knotted domain maps to 184–329; the sequence is TFKDETETDL…SQLRDLMSWV (146 aa). Mg(2+) is bound by residues Asp192, Glu196, Glu228, and Glu232. Ser253 provides a ligand contact to substrate.

This sequence belongs to the ketol-acid reductoisomerase family. Requires Mg(2+) as cofactor.

It carries out the reaction (2R)-2,3-dihydroxy-3-methylbutanoate + NADP(+) = (2S)-2-acetolactate + NADPH + H(+). The enzyme catalyses (2R,3R)-2,3-dihydroxy-3-methylpentanoate + NADP(+) = (S)-2-ethyl-2-hydroxy-3-oxobutanoate + NADPH + H(+). It participates in amino-acid biosynthesis; L-isoleucine biosynthesis; L-isoleucine from 2-oxobutanoate: step 2/4. Its pathway is amino-acid biosynthesis; L-valine biosynthesis; L-valine from pyruvate: step 2/4. Its function is as follows. Involved in the biosynthesis of branched-chain amino acids (BCAA). Catalyzes an alkyl-migration followed by a ketol-acid reduction of (S)-2-acetolactate (S2AL) to yield (R)-2,3-dihydroxy-isovalerate. In the isomerase reaction, S2AL is rearranged via a Mg-dependent methyl migration to produce 3-hydroxy-3-methyl-2-ketobutyrate (HMKB). In the reductase reaction, this 2-ketoacid undergoes a metal-dependent reduction by NADPH to yield (R)-2,3-dihydroxy-isovalerate. This is Ketol-acid reductoisomerase (NADP(+)) from Corynebacterium aurimucosum (strain ATCC 700975 / DSM 44827 / CIP 107346 / CN-1) (Corynebacterium nigricans).